A 253-amino-acid chain; its full sequence is Triosephosphate isomerase (253 aa).

8–10 (NWK) lines the substrate pocket. His-93 (electrophile) is an active-site residue. The active-site Proton acceptor is the Glu-165. Residues Gly-171, Ser-210, and 231–232 (GG) contribute to the substrate site.

Belongs to the triosephosphate isomerase family. In terms of assembly, homodimer.

It localises to the cytoplasm. The enzyme catalyses D-glyceraldehyde 3-phosphate = dihydroxyacetone phosphate. Its pathway is carbohydrate biosynthesis; gluconeogenesis. The protein operates within carbohydrate degradation; glycolysis; D-glyceraldehyde 3-phosphate from glycerone phosphate: step 1/1. Involved in the gluconeogenesis. Catalyzes stereospecifically the conversion of dihydroxyacetone phosphate (DHAP) to D-glyceraldehyde-3-phosphate (G3P). The polypeptide is Triosephosphate isomerase (Francisella tularensis subsp. novicida (strain U112)).